Reading from the N-terminus, the 238-residue chain is Phosphoglycolate phosphatase (238 aa).

Residue Asp8 is the Nucleophile of the active site. 2 residues coordinate Mg(2+): Asp8 and Asp10. Substrate is bound at residue Lys163. Residues Asp186 and Asp190 each coordinate Mg(2+).

This sequence belongs to the archaeal SPP-like hydrolase family. It depends on Mg(2+) as a cofactor.

The catalysed reaction is 2-phosphoglycolate + H2O = glycolate + phosphate. Functionally, catalyzes the dephosphorylation of 2-phosphoglycolate. The sequence is that of Phosphoglycolate phosphatase from Staphylothermus marinus (strain ATCC 43588 / DSM 3639 / JCM 9404 / F1).